The sequence spans 271 residues: GATA transcription factor 19 (271 aa).

The disordered stretch occupies residues 1–23; the sequence is MAAEPPADGRDPPADDGAAGDGA. The Tify domain occupies 33–68; the sequence is LSAASEQLTLVYQGEVYVFDPVPPQKVQAVLLVLGG. Residues 95–137 form the CCT domain; sequence RIASLMRFREKRKERCFDKKIRYSVRKEVAQKMKRRKGQFAGR. Residues 166-193 form a GATA-type zinc finger; sequence CQNCGISSRLTPAMRRGPAGPRSLCNAC. The interval 238-271 is disordered; it reads NQTTMKTDTEMVPEQEQKADVLPPTKEEDSMATS. Residues 252–271 show a composition bias toward basic and acidic residues; it reads QEQKADVLPPTKEEDSMATS.

This sequence belongs to the type IV zinc-finger family. Class C subfamily.

The protein resides in the nucleus. In terms of biological role, transcriptional activator that specifically binds 5'-GATA-3' or 5'-GAT-3' motifs within gene promoters. The chain is GATA transcription factor 19 from Oryza sativa subsp. indica (Rice).